The primary structure comprises 158 residues: 2-C-methyl-D-erythritol 2,4-cyclodiphosphate synthase (158 aa).

A divalent metal cation-binding residues include Asp-9 and His-11. Residues 9-11 and 35-36 each bind 4-CDP-2-C-methyl-D-erythritol 2-phosphate; these read DVH and HS. Residue His-43 coordinates a divalent metal cation. Residues 57–59, 62–66, 101–107, 133–136, Phe-140, and Arg-143 each bind 4-CDP-2-C-methyl-D-erythritol 2-phosphate; these read DIG, FPDTD, AQKPKMA, and TTTE.

Belongs to the IspF family. In terms of assembly, homotrimer. A divalent metal cation serves as cofactor.

It catalyses the reaction 4-CDP-2-C-methyl-D-erythritol 2-phosphate = 2-C-methyl-D-erythritol 2,4-cyclic diphosphate + CMP. It functions in the pathway isoprenoid biosynthesis; isopentenyl diphosphate biosynthesis via DXP pathway; isopentenyl diphosphate from 1-deoxy-D-xylulose 5-phosphate: step 4/6. Its function is as follows. Involved in the biosynthesis of isopentenyl diphosphate (IPP) and dimethylallyl diphosphate (DMAPP), two major building blocks of isoprenoid compounds. Catalyzes the conversion of 4-diphosphocytidyl-2-C-methyl-D-erythritol 2-phosphate (CDP-ME2P) to 2-C-methyl-D-erythritol 2,4-cyclodiphosphate (ME-CPP) with a corresponding release of cytidine 5-monophosphate (CMP). The polypeptide is 2-C-methyl-D-erythritol 2,4-cyclodiphosphate synthase (Bacillus licheniformis (strain ATCC 14580 / DSM 13 / JCM 2505 / CCUG 7422 / NBRC 12200 / NCIMB 9375 / NCTC 10341 / NRRL NRS-1264 / Gibson 46)).